A 77-amino-acid polypeptide reads, in one-letter code: Translation initiation factor IF-1, chloroplastic (77 aa).

In terms of domain architecture, S1-like spans 1–71 (MKRQKWIHEG…TRGRIIYRLR (71 aa)).

This sequence belongs to the IF-1 family. Component of the 30S ribosomal translation pre-initiation complex which assembles on the 30S ribosome in the order IF-2 and IF-3, IF-1 and N-formylmethionyl-tRNA(fMet); mRNA recruitment can occur at any time during PIC assembly.

The protein resides in the plastid. It is found in the chloroplast. Its function is as follows. One of the essential components for the initiation of protein synthesis. Stabilizes the binding of IF-2 and IF-3 on the 30S subunit to which N-formylmethionyl-tRNA(fMet) subsequently binds. Helps modulate mRNA selection, yielding the 30S pre-initiation complex (PIC). Upon addition of the 50S ribosomal subunit IF-1, IF-2 and IF-3 are released leaving the mature 70S translation initiation complex. The polypeptide is Translation initiation factor IF-1, chloroplastic (Leucophyllum frutescens (Texas ranger)).